A 1497-amino-acid polypeptide reads, in one-letter code: Polyunsaturated fatty acid synthase subunit C (1497 aa).

Dehydratase (DH) domain regions lie at residues 271-422 and 797-937; these read YKLC…DYGK and QGQY…RVRI. Low complexity predominate over residues 944–958; that stretch reads ASSSASSVGSSASAE. The disordered stretch occupies residues 944-977; sequence ASSSASSVGSSASAEVAERTRSKAAPQPVASGPA. Positions 1026–1470 are enoylreductase (ER) domain; that stretch reads LGDLGDRSFM…ILRGACYLRR (445 aa).

This sequence belongs to the thioester dehydratase family. FabA subfamily. In terms of assembly, component of the polyunsaturated fatty acid synthase complex composed of at least ORF-A, ORF-B and ORF-C.

The protein operates within lipid metabolism; fatty acid biosynthesis. Functionally, polyketide synthase-like protein; part of the polyunsaturated fatty acid synthase composed of the 3 PKS-like subunits A, B and C. While the saturated fatty acids (SFAs) in Thraustochytrium are produced by the conventional fatty acid synthase (FAS) pathway, polyunsaturated fatty acids (PUFAs) including docosahexeanoic acid (DHA) and docosapentaenoic acid (DPA) are synthesized via an anaerobical PKS pathway. PUFA synthase assimilates fatty acyl-CoA, the product of FAS, as the starter unit to synthesize DPA, and this starter unit may be butyryl-CoA, hexanoyl-CoA, or octanoyl-CoA. DPA and DHA biosynthesis seem to differ by the reduction at the N-3 position by PUFA synthase, not the extension of carbon chain. In DHA biosynthesis, PUFA synthase extends the fatty acyl chain from the methyl toward the carboxyl end, and the double bond is formed when the carbon chain is growing, instead of afterward. Therefore, PUFA synthase is unable to transform DPA to DHA, suggesting that DPA is not the precursor of DHA. Moreover, DPA molecule is partly extended by FAS KS domain, so DPA biosynthesis is less dependent on PUFA synthase KS domain than DHA. This is Polyunsaturated fatty acid synthase subunit C from Thraustochytrium sp. (strain ATCC 26185 / S-3).